A 70-amino-acid chain; its full sequence is Small ribosomal subunit protein eS17 (70 aa).

This sequence belongs to the eukaryotic ribosomal protein eS17 family.

The polypeptide is Small ribosomal subunit protein eS17 (Methanopyrus kandleri (strain AV19 / DSM 6324 / JCM 9639 / NBRC 100938)).